Here is a 234-residue protein sequence, read N- to C-terminus: UPF0502 protein Reut_B4455 (234 aa).

Belongs to the UPF0502 family.

The sequence is that of UPF0502 protein Reut_B4455 from Cupriavidus pinatubonensis (strain JMP 134 / LMG 1197) (Cupriavidus necator (strain JMP 134)).